Reading from the N-terminus, the 317-residue chain is Ribosomal protein L11 methyltransferase (317 aa).

S-adenosyl-L-methionine is bound by residues Thr158, Gly179, Asp201, and Asn244.

It belongs to the methyltransferase superfamily. PrmA family.

Its subcellular location is the cytoplasm. It carries out the reaction L-lysyl-[protein] + 3 S-adenosyl-L-methionine = N(6),N(6),N(6)-trimethyl-L-lysyl-[protein] + 3 S-adenosyl-L-homocysteine + 3 H(+). Functionally, methylates ribosomal protein L11. The protein is Ribosomal protein L11 methyltransferase of Streptococcus agalactiae serotype III (strain NEM316).